Consider the following 116-residue polypeptide: Iron-sulfur cluster insertion protein ErpA (116 aa).

3 residues coordinate iron-sulfur cluster: cysteine 44, cysteine 108, and cysteine 110.

The protein belongs to the HesB/IscA family. Homodimer. The cofactor is iron-sulfur cluster.

Functionally, required for insertion of 4Fe-4S clusters for at least IspG. The polypeptide is Iron-sulfur cluster insertion protein ErpA (Francisella tularensis subsp. mediasiatica (strain FSC147)).